We begin with the raw amino-acid sequence, 346 residues long: D-erythrose-4-phosphate dehydrogenase (346 aa).

11–12 (RI) lines the NAD(+) pocket. Substrate is bound by residues 163-165 (SCT), Arg209, 222-223 (TK), and Arg245. The Nucleophile role is filled by Cys164. Residue Asn327 participates in NAD(+) binding.

This sequence belongs to the glyceraldehyde-3-phosphate dehydrogenase family. Epd subfamily. In terms of assembly, homotetramer.

Its subcellular location is the cytoplasm. The enzyme catalyses D-erythrose 4-phosphate + NAD(+) + H2O = 4-phospho-D-erythronate + NADH + 2 H(+). The protein operates within cofactor biosynthesis; pyridoxine 5'-phosphate biosynthesis; pyridoxine 5'-phosphate from D-erythrose 4-phosphate: step 1/5. Functionally, catalyzes the NAD-dependent conversion of D-erythrose 4-phosphate to 4-phosphoerythronate. The sequence is that of D-erythrose-4-phosphate dehydrogenase from Vibrio vulnificus (strain YJ016).